A 546-amino-acid polypeptide reads, in one-letter code: Aladin (546 aa).

The residue at position 2 (C2) is an N-acetylcysteine. S33 is modified (phosphoserine). WD repeat units lie at residues 149 to 188 (WSSCCLRVFAWHPHTNKFAVALLDDSIRVYNANSTIVPSL), 191 to 230 (RLQRNVAALAWKPLSASVLAVACQSCILIWTLDPTSLSTR), 243 to 282 (GHTPVTSLAWAPNGGWLLSASPVDAVILVWDVSTETCVPL), and 285 to 324 (FRGGGVTNLLWSPDGSKVLATTPSAVFRVWEAQMWTCEAW). S495, S511, S522, S525, and S541 each carry phosphoserine. A disordered region spans residues 500–546 (RAQEPPAGGGGSIHEVPLFTETSPTSAPWDPLPGQSSAQPHSPHSHL). A compositionally biased stretch (low complexity) spans 534 to 546 (QSSAQPHSPHSHL). The Microbody targeting signal signature appears at 544-546 (SHL).

In terms of assembly, interacts with NDC1, the interaction is required for nuclear pore localization. Interacts with the inactive form aurora kinase AURKA. Interacts with PGRMC2. Widely expressed. Particularly abundant in cerebellum, corpus callosum, adrenal gland, pituitary gland, gastrointestinal structures and fetal lung.

The protein resides in the nucleus. It localises to the nuclear pore complex. It is found in the cytoplasm. Its subcellular location is the cytoskeleton. The protein localises to the spindle pole. The protein resides in the nucleus envelope. In terms of biological role, plays a role in the normal development of the peripheral and central nervous system. Required for the correct localization of aurora kinase AURKA and the microtubule minus end-binding protein NUMA1 as well as a subset of AURKA targets which ensures proper spindle formation and timely chromosome alignment. This is Aladin (Aaas) from Mus musculus (Mouse).